Reading from the N-terminus, the 598-residue chain is MSDNQSWNSSGSEEDPETESGPPVERCGVLSKWTNYIHGWQDRWVVLKNNTLSYYKSEDETEYGCRGSICLSKAVITPHDFDECRFDISVNDSVWYLRAQDPDHRQQWIDAIEQHKTESGYGSESSLRRHGSMVSLVSGASGYSATSTSSFKKGHSLREKLAEMETFRDILCRQVDTLQKYFDVCADAVSKDELQRDKVVEDDEDDFPTTRSDGDFLHNTNGNKEKLFPHVTPKGINGIDFKGEAITFKATTAGILATLSHCIELMVKREESWQKRHDKEMEKRRRLEEAYKNAMAELKKKPRFGGPDYEEGPNSLINEEEFFDAVEAALDRQDKIEEQSQSEKVRLHWPTPLPSGDAFSSVGTHRFVQKVEEMVQNHMTYSLQDVGGDANWQLVVEEGEMKVYRREVEENGIVLDPLKATHAVKGVTGHEVCNYFWSVDVRNDWETTIENFHVVETLADNAIIIYQTHKRVWPASQRDVLYLSAIRKIPALTENDPETWIVCNFSVDHDSAPLNNRCVRAKINVAMICQTLVSPPEGNQEISRDNILCKITYVANVNPGGWAPASVLRAVAKREYPKFLKRFTSYVQEKTAGKPILF.

The span at 1 to 11 (MSDNQSWNSSG) shows a compositional bias: polar residues. A disordered region spans residues 1–24 (MSDNQSWNSSGSEEDPETESGPPV). The region spanning 23 to 117 (PVERCGVLSK…WIDAIEQHKT (95 aa)) is the PH domain. Position 126 is a phosphoserine (Ser-126). Phosphoserine; by PKD is present on Ser-132. Ser-135 is modified (phosphoserine). The interval 202–221 (DDEDDFPTTRSDGDFLHNTN) is disordered. Residues 268 to 301 (KREESWQKRHDKEMEKRRRLEEAYKNAMAELKKK) are a coiled coil. Ser-315 carries the post-translational modification Phosphoserine. Positions 321–327 (EFFDAVE) match the FFAT motif. One can recognise an START domain in the interval 363-592 (GTHRFVQKVE…FTSYVQEKTA (230 aa)). Positions 446, 467, 504, and 553 each coordinate an N-acylsphing-4-enine.

In terms of assembly, interacts with VAPA and VAPB. Interaction with VAPB is less efficient than with VAPA. Interacts (via FFAT motif) with the MOSPD2 (via MSP domain). Post-translationally, phosphorylation on Ser-132 decreases the affinity toward phosphatidylinositol 4-phosphate at Golgi membranes and reduces ceramide transfer activity. Inactivated by hyperphosphorylation of serine residues by CSNK1G2/CK1 that triggers dissociation from the Golgi complex, thus down-regulating ER-to-Golgi transport of ceramide and sphingomyelin synthesis.

The protein localises to the cytoplasm. It is found in the golgi apparatus. Its subcellular location is the endoplasmic reticulum. The enzyme catalyses N-hexadecanoylsphing-4-enine(in) = N-hexadecanoylsphing-4-enine(out). Functionally, shelters ceramides and diacylglycerol lipids inside its START domain and mediates the intracellular trafficking of ceramides and diacylglycerol lipids in a non-vesicular manner. The sequence is that of Ceramide transfer protein (CERT1) from Cricetulus griseus (Chinese hamster).